Reading from the N-terminus, the 184-residue chain is MLASASPARRRLLQQAAIPHQVMVSGVDEETIHHFDPVRLVQHLAEAKAGVVHQQIKAALPVLGCDSVLEFDGTVFGKPATAVEASSRWQRMAGAWGFLHTGHCLLSVNGERLSETVTTRVLFAALSDSEIEAYVATGEPLLCAGGFALEGQGGLMVERLEGCFSNVIGLSLPLLRRWLLVINE.

Asp66 acts as the Proton acceptor in catalysis.

It belongs to the Maf family. A divalent metal cation serves as cofactor.

Its subcellular location is the cytoplasm. The enzyme catalyses a ribonucleoside 5'-triphosphate + H2O = a ribonucleoside 5'-phosphate + diphosphate + H(+). It carries out the reaction a 2'-deoxyribonucleoside 5'-triphosphate + H2O = a 2'-deoxyribonucleoside 5'-phosphate + diphosphate + H(+). Its function is as follows. Nucleoside triphosphate pyrophosphatase. May have a dual role in cell division arrest and in preventing the incorporation of modified nucleotides into cellular nucleic acids. This is Nucleoside triphosphate pyrophosphatase from Prochlorococcus marinus (strain MIT 9313).